A 447-amino-acid polypeptide reads, in one-letter code: Chromosomal replication initiator protein DnaA (447 aa).

Positions 1–74 (MPDVESFWHS…TGFKLTGAEV (74 aa)) are domain I, interacts with DnaA modulators. The domain II stretch occupies residues 74 to 109 (VMPHFVVADEKDAALAQELEEPAEEEVVFSEQSKKA). Residues 110 to 326 (MLNPKYTFDT…GALVRVQAFA (217 aa)) form a domain III, AAA+ region region. ATP contacts are provided by Gly154, Gly156, Lys157, and Thr158. The tract at residues 327–447 (TINGEDITTS…VSEIKNLLNS (121 aa)) is domain IV, binds dsDNA.

Belongs to the DnaA family. As to quaternary structure, oligomerizes as a right-handed, spiral filament on DNA at oriC.

Its subcellular location is the cytoplasm. Its function is as follows. Plays an essential role in the initiation and regulation of chromosomal replication. ATP-DnaA binds to the origin of replication (oriC) to initiate formation of the DNA replication initiation complex once per cell cycle. Binds the DnaA box (a 9 base pair repeat at the origin) and separates the double-stranded (ds)DNA. Forms a right-handed helical filament on oriC DNA; dsDNA binds to the exterior of the filament while single-stranded (ss)DNA is stabiized in the filament's interior. The ATP-DnaA-oriC complex binds and stabilizes one strand of the AT-rich DNA unwinding element (DUE), permitting loading of DNA polymerase. After initiation quickly degrades to an ADP-DnaA complex that is not apt for DNA replication. Binds acidic phospholipids. In terms of biological role, strand separation requires the DnaA boxes and adjacent DnaA-trio motifs as well as ATP. The sequence is that of Chromosomal replication initiator protein DnaA from Enterococcus faecalis (strain ATCC 700802 / V583).